Reading from the N-terminus, the 189-residue chain is HTH-type transcriptional repressor AcnR (189 aa).

The HTH tetR-type domain maps to 10 to 70; that stretch reads AERKVEILSG…EVAHEDMRKM (61 aa). Residues 33–52 constitute a DNA-binding region (H-T-H motif); that stretch reads TVARLEETIGKSRGAIFHHY. Citrate contacts are provided by residues 79 to 80, R130, and Q134; that span reads LI. E181 contributes to the Mg(2+) binding site. A citrate-binding site is contributed by R185.

As to quaternary structure, homodimer.

AcnR negatively controls the expression of the aconitase gene acn. This is HTH-type transcriptional repressor AcnR from Corynebacterium jeikeium (strain K411).